We begin with the raw amino-acid sequence, 259 residues long: Thiazole synthase (259 aa).

K99 acts as the Schiff-base intermediate with DXP in catalysis. Residues G160, A186–G187, and N208–T209 each bind 1-deoxy-D-xylulose 5-phosphate.

Belongs to the ThiG family. As to quaternary structure, homotetramer. Forms heterodimers with either ThiH or ThiS.

Its subcellular location is the cytoplasm. It catalyses the reaction [ThiS sulfur-carrier protein]-C-terminal-Gly-aminoethanethioate + 2-iminoacetate + 1-deoxy-D-xylulose 5-phosphate = [ThiS sulfur-carrier protein]-C-terminal Gly-Gly + 2-[(2R,5Z)-2-carboxy-4-methylthiazol-5(2H)-ylidene]ethyl phosphate + 2 H2O + H(+). It participates in cofactor biosynthesis; thiamine diphosphate biosynthesis. Catalyzes the rearrangement of 1-deoxy-D-xylulose 5-phosphate (DXP) to produce the thiazole phosphate moiety of thiamine. Sulfur is provided by the thiocarboxylate moiety of the carrier protein ThiS. In vitro, sulfur can be provided by H(2)S. The polypeptide is Thiazole synthase (Porphyromonas gingivalis (strain ATCC BAA-308 / W83)).